The primary structure comprises 332 residues: RNA polymerase II holoenzyme cyclin-like subunit (332 aa).

A Cyclin N-terminal domain is found at 74-175 (RIYCYFLIMK…LIEELQSYMI (102 aa)).

It belongs to the cyclin family. Cyclin C subfamily. Component of the SRB8-11 complex, a regulatory module of the Mediator complex.

The protein resides in the nucleus. Its function is as follows. Component of the SRB8-11 complex. The SRB8-11 complex is a regulatory module of the Mediator complex which is itself involved in regulation of basal and activated RNA polymerase II-dependent transcription. The SRB8-11 complex may be involved in the transcriptional repression of a subset of genes regulated by Mediator. It may inhibit the association of the Mediator complex with RNA polymerase II to form the holoenzyme complex. The SRB8-11 complex phosphorylates the C-terminal domain (CTD) of the largest subunit of RNA polymerase II. This is RNA polymerase II holoenzyme cyclin-like subunit (SSN8) from Eremothecium gossypii (strain ATCC 10895 / CBS 109.51 / FGSC 9923 / NRRL Y-1056) (Yeast).